We begin with the raw amino-acid sequence, 926 residues long: Peripheral plasma membrane protein CASK (926 aa).

Residues 12–276 (YELCEVIGKG…VYEALNHPWL (265 aa)) form the Protein kinase domain. ATP is bound by residues 18-26 (IGKGPFSVV) and Lys41. Ser51 is modified (phosphoserine). Asp141 is an active-site residue. Residues Ser151 and Ser155 each carry the phosphoserine; by autocatalysis modification. Position 182 is a phosphothreonine (Thr182). Phosphoserine is present on residues Lys192 and Ser313. The segment at 305–315 (KGAVLAAVSSH) is calmodulin-binding. L27 domains follow at residues 343-398 (AERA…SPQI) and 402-455 (PSDA…YSDE). The interval 482-909 (MENVTRVRLV…DETIRHLEEA (428 aa)) is required for interaction with NRXN1 (via C-terminal tail). Residues 489–564 (RLVQFQKNTD…MLREMRGSIT (76 aa)) form the PDZ domain. Phosphoserine is present on residues Tyr571 and Ser577. Positions 574 to 610 (QSSSCERDSPSTSRQSPANGHSSTNNSVSDLPSTTQP) are disordered. Positions 612-682 (GRQIYVRAQF…PSPELQEWRV (71 aa)) constitute an SH3 domain. Residues 739–911 (RKTLVLLGAH…TIRHLEEAVE (173 aa)) form the Guanylate kinase-like domain.

The protein in the N-terminal section; belongs to the protein kinase superfamily. CAMK Ser/Thr protein kinase family. CaMK subfamily. Belongs to the MAGUK family. In terms of assembly, CASK and LIN7 form two mutually exclusive tripartite complexes with APBA1 or CASKIN1. Component of the brain-specific heterotrimeric complex (LIN-10-LIN-2-LIN-7 complex) composed of at least APBA1, CASK, and LIN7, which associates with the motor protein KIF17 to transport vesicles along microtubules. Forms a heterotrimeric complex with DLG1 and LIN7B via their L27 domains. Identified in a complex with ACTN4, IQGAP1, MAGI2, NPHS1, SPTAN1 and SPTBN1. Part of a complex containing CASK, TBR1 and TSPYL2. Interacts with WHRN. Interacts (via the PDZ, SH3 and guanylate kinase-like domains) with NRXN1 (via C-terminus). Interacts with CASKIN1, APBA1, LIN7(A/B/C) and L27 domain of DLG1 and isoform 2 of DLG4. Interacts with FCHSD2. Interacts with KIRREL3. Interacts with TBR1. Interacts with TSPYL2. The cofactor is Unlike other protein kinases, does not require a divalent cation such as magnesium for catalytic activity.. Ubiquitous. Expression is significantly greater in brain relative to kidney, lung, and liver and in fetal brain and kidney relative to lung and liver.

Its subcellular location is the nucleus. It localises to the cytoplasm. The protein localises to the cell membrane. The enzyme catalyses L-seryl-[protein] + ATP = O-phospho-L-seryl-[protein] + ADP + H(+). It carries out the reaction L-threonyl-[protein] + ATP = O-phospho-L-threonyl-[protein] + ADP + H(+). Differs from archetypal CaMK members in that the kinase domain exhibits a constitutively active conformation and the autoinhibitory region does not engage in direct contact with the ATP-binding cleft, although it still binds Ca(2+)/CAM. Functionally, multidomain scaffolding Mg(2+)-independent protein kinase that catalyzes the phosphotransfer from ATP to proteins such as NRXN1, and plays a role in synaptic transmembrane protein anchoring and ion channel trafficking. Contributes to neural development and regulation of gene expression via interaction with the transcription factor TBR1. Binds to cell-surface proteins, including amyloid precursor protein, neurexins and syndecans. May mediate a link between the extracellular matrix and the actin cytoskeleton via its interaction with syndecan and with the actin/spectrin-binding protein 4.1. Component of the LIN-10-LIN-2-LIN-7 complex, which associates with the motor protein KIF17 to transport vesicles containing N-methyl-D-aspartate (NMDA) receptor subunit NR2B along microtubules. This is Peripheral plasma membrane protein CASK from Homo sapiens (Human).